The sequence spans 422 residues: Serine hydroxymethyltransferase 2 (422 aa).

(6S)-5,6,7,8-tetrahydrofolate is bound by residues L121 and 125-127; that span reads GHL. K230 is subject to N6-(pyridoxal phosphate)lysine.

It belongs to the SHMT family. In terms of assembly, homodimer. Pyridoxal 5'-phosphate is required as a cofactor.

Its subcellular location is the cytoplasm. It catalyses the reaction (6R)-5,10-methylene-5,6,7,8-tetrahydrofolate + glycine + H2O = (6S)-5,6,7,8-tetrahydrofolate + L-serine. It functions in the pathway one-carbon metabolism; tetrahydrofolate interconversion. Its pathway is amino-acid biosynthesis; glycine biosynthesis; glycine from L-serine: step 1/1. Its function is as follows. Catalyzes the reversible interconversion of serine and glycine with tetrahydrofolate (THF) serving as the one-carbon carrier. This reaction serves as the major source of one-carbon groups required for the biosynthesis of purines, thymidylate, methionine, and other important biomolecules. Also exhibits THF-independent aldolase activity toward beta-hydroxyamino acids, producing glycine and aldehydes, via a retro-aldol mechanism. This is Serine hydroxymethyltransferase 2 from Agrobacterium fabrum (strain C58 / ATCC 33970) (Agrobacterium tumefaciens (strain C58)).